A 1581-amino-acid chain; its full sequence is ATP-binding cassette sub-family C member 8 (1581 aa).

At 1 to 30 (MPLAFCGSENHSAAYRVDQGVLNNGCFVDA) the chain is on the extracellular side. A disulfide bridge links C6 with C26. N10 is a glycosylation site (N-linked (GlcNAc...) asparagine). The helical transmembrane segment at 31–47 (LNVVPHVFLLFITFPIL) threads the bilayer. Residues 48–72 (FIGWGSQSSKVHIHHSTWLHFPGHN) lie on the Cytoplasmic side of the membrane. The helical transmembrane segment at 73 to 89 (LRWILTFMLLFVLVCEI) threads the bilayer. Residues 90 to 106 (AEGILSDGVTESHHLHL) lie on the Extracellular side of the membrane. Residues 107–123 (YMPAGMAFMAAVTSVVY) traverse the membrane as a helical segment. Residues 124 to 136 (YHNIETSNFPKLL) are Cytoplasmic-facing. The chain crosses the membrane as a helical span at residues 137–153 (IALLVYWTLAFITKTIK). Residues 154 to 169 (FVKFLDHAIGFSQLRF) are Extracellular-facing. A helical transmembrane segment spans residues 170–186 (CLTGLLVILYGMLLLVE). Topologically, residues 187-303 (VNVIRVRRYI…AFGRRLVLSS (117 aa)) are cytoplasmic. The region spanning 299-602 (LVLSSTFRIL…LSSVVRSTVK (304 aa)) is the ABC transmembrane type-1 1 domain. Residues 304-319 (TFRILADLLGFAGPLC) form a helical membrane-spanning segment. The Extracellular portion of the chain corresponds to 320 to 356 (IFGIVDHLGKENDVFQPKTQFLGVYFVSSQEFLANAY). The helical transmembrane segment at 357–372 (VLAVLLFLALLLQRTF) threads the bilayer. The Cytoplasmic portion of the chain corresponds to 373–438 (LQASYYVAIE…MWFFFLCPNL (66 aa)). The chain crosses the membrane as a helical span at residues 439-454 (WAMPVQIIVGVILLYY). The Extracellular portion of the chain corresponds to 455–460 (ILGVSA). Residues 461 to 473 (LIGAAVIILLAPV) traverse the membrane as a helical segment. Over 474 to 541 (QYFVATKLSQ…SLRAFAIYTS (68 aa)) the chain is Cytoplasmic. Residues 542–557 (ISIFMNTAIPIAAVLI) traverse the membrane as a helical segment. Topologically, residues 558–576 (TFVGHVSFFKEADFSPSVA) are extracellular. Residues 577 to 592 (FASLSLFHILVTPLFL) form a helical membrane-spanning segment. At 593–1012 (LSSVVRSTVK…YLSSAGILLL (420 aa)) the chain is on the cytoplasmic side. The region spanning 679–929 (VQIMGGYFTW…ECQLFEHWKT (251 aa)) is the ABC transporter 1 domain. Residues W688, G716, S720, and S721 each coordinate ATP. Residue S720 coordinates Mg(2+). Mg(2+) is bound at residue Q774. Residues 935 to 949 (DQELEKETVTERKAT) are compositionally biased toward basic and acidic residues. The disordered stretch occupies residues 935-987 (DQELEKETVTERKATEPPQGLSRAMSSRDGLLQDEEEEEEEAAESEEDDNLSS). Residues 966–984 (LQDEEEEEEEAAESEEDDN) show a composition bias toward acidic residues. The ABC transmembrane type-1 2 domain occupies 1012 to 1306 (LSLLVFSQLL…MVRNLADMEL (295 aa)). A helical transmembrane segment spans residues 1013–1030 (SLLVFSQLLKHMVLVAID). The Extracellular segment spans residues 1031-1066 (YWLAKWTDSALTLTPAARNCSLSQECTLDQTVYAMV). N1049 carries an N-linked (GlcNAc...) asparagine glycan. A helical transmembrane segment spans residues 1067 to 1083 (FTVLCSLGIVLCLVTSV). Over 1084 to 1142 (TVEWTGLKVAKRLHRSLLNRIILAPMRFFETTPLGSILNRFSSDCNTIDQHIPSTLECL) the chain is Cytoplasmic. The helical transmembrane segment at 1143-1160 (SRSTLLCVSALAVISYVT) threads the bilayer. Position 1161 (P1161) is a topological domain, extracellular. A helical membrane pass occupies residues 1162–1174 (VFLVALLPLAIVC). The Cytoplasmic segment spans residues 1175 to 1248 (YFIQKYFRVA…FLTAANRWLE (74 aa)). A helical membrane pass occupies residues 1249–1264 (VRMEYIGACVVLIAAV). The Extracellular segment spans residues 1265–1280 (TSISNSLHRELSAGLV). A helical membrane pass occupies residues 1281–1296 (GLGLTYALMVSNYLNW). The Cytoplasmic portion of the chain corresponds to 1297 to 1581 (MVRNLADMEL…VFASFVRADK (285 aa)). Positions 1344–1578 (IQIQNLSVRY…KDSVFASFVR (235 aa)) constitute an ABC transporter 2 domain. ADP-binding residues include T1380, G1381, G1383, K1384, S1385, and S1386. S1482 provides a ligand contact to ATP.

The protein belongs to the ABC transporter superfamily. ABCC family. Conjugate transporter (TC 3.A.1.208) subfamily. Forms an heterooctamer with KCNJ11; four ABCC8/SUR1 molecules interact with one KCNJ11 homotetramer.

It is found in the cell membrane. With respect to regulation, KATP channels are regulated by cytoplasmic ATP/ADP ratios; ATP inhibits the channel by closing the pore, while ADP activates the channel. Activated by phosphatidylinositol 4,5-biphosphate (PtdIns(4,5)P2). In terms of biological role, regulator subunit of pancreatic ATP-sensitive potassium channel (KATP), playing a major role in the regulation of insulin release. In pancreatic cells, it forms KATP channels with KCNJ11; KCNJ11 forms the channel pore while ABCC8 is required for activation and regulation. This is ATP-binding cassette sub-family C member 8 (ABCC8) from Homo sapiens (Human).